A 337-amino-acid chain; its full sequence is Glyceraldehyde-3-phosphate dehydrogenase (337 aa).

Residues threonine 11–isoleucine 12 and glycine 111 contribute to the NAD(+) site. Serine 140–asparagine 142 serves as a coordination point for D-glyceraldehyde 3-phosphate. Cysteine 141 functions as the Nucleophile in the catalytic mechanism. Arginine 169 provides a ligand contact to NAD(+). A disordered region spans residues lysine 177–proline 196. Histidine 194–glycine 195 provides a ligand contact to D-glyceraldehyde 3-phosphate. Glutamine 301 contacts NAD(+).

It belongs to the glyceraldehyde-3-phosphate dehydrogenase family. Homotetramer.

The protein resides in the cytoplasm. It catalyses the reaction D-glyceraldehyde 3-phosphate + phosphate + NADP(+) = (2R)-3-phospho-glyceroyl phosphate + NADPH + H(+). The enzyme catalyses D-glyceraldehyde 3-phosphate + phosphate + NAD(+) = (2R)-3-phospho-glyceroyl phosphate + NADH + H(+). It functions in the pathway carbohydrate degradation; glycolysis; pyruvate from D-glyceraldehyde 3-phosphate: step 1/5. The protein is Glyceraldehyde-3-phosphate dehydrogenase of Methanosphaera stadtmanae (strain ATCC 43021 / DSM 3091 / JCM 11832 / MCB-3).